The sequence spans 441 residues: ATP-dependent RNA helicase sub2 (441 aa).

The segment covering D19–A29 has biased composition (low complexity). The tract at residues D19 to G43 is disordered. The Q motif signature appears at T58–Q86. The Helicase ATP-binding domain occupies I89–V264. A102–T109 serves as a coordination point for ATP. The short motif at D211 to D214 is the DEAD box element. The 162-residue stretch at G276–S437 folds into the Helicase C-terminal domain.

The protein belongs to the DEAD box helicase family. DECD subfamily.

The protein resides in the nucleus. The enzyme catalyses ATP + H2O = ADP + phosphate + H(+). ATP-binding RNA helicase involved in transcription elongation and required for the export of mRNA out of the nucleus. SUB2 also plays a role in pre-mRNA splicing and spliceosome assembly. May be involved in rDNA and telomeric silencing, and maintenance of genome integrity. The protein is ATP-dependent RNA helicase sub2 (sub2) of Neosartorya fischeri (strain ATCC 1020 / DSM 3700 / CBS 544.65 / FGSC A1164 / JCM 1740 / NRRL 181 / WB 181) (Aspergillus fischerianus).